Here is a 151-residue protein sequence, read N- to C-terminus: 3-hydroxyacyl-[acyl-carrier-protein] dehydratase FabZ (151 aa).

The active site involves histidine 52.

It belongs to the thioester dehydratase family. FabZ subfamily.

It is found in the cytoplasm. It catalyses the reaction a (3R)-hydroxyacyl-[ACP] = a (2E)-enoyl-[ACP] + H2O. Its function is as follows. Involved in unsaturated fatty acids biosynthesis. Catalyzes the dehydration of short chain beta-hydroxyacyl-ACPs and long chain saturated and unsaturated beta-hydroxyacyl-ACPs. This chain is 3-hydroxyacyl-[acyl-carrier-protein] dehydratase FabZ (fabZ1), found in Lactococcus lactis subsp. lactis (strain IL1403) (Streptococcus lactis).